An 832-amino-acid chain; its full sequence is Putative beta-glucosidase (832 aa).

Asp225 is an active-site residue. The PA14 domain occupies 397 to 556 (TGKHGYVAKF…DPETEIDYAV (160 aa)).

This sequence belongs to the glycosyl hydrolase 3 family.

It is found in the cytoplasm. It catalyses the reaction Hydrolysis of terminal, non-reducing beta-D-glucosyl residues with release of beta-D-glucose.. This is Putative beta-glucosidase from Schizosaccharomyces pombe (strain 972 / ATCC 24843) (Fission yeast).